We begin with the raw amino-acid sequence, 211 residues long: Metalloproteinase inhibitor 3 (211 aa).

Positions 1–23 (MTPWLGLVVLLGSWSLGDWGAEA) are cleaved as a signal peptide. C24 contributes to the Zn(2+) binding site. Involved in metalloproteinase-binding regions lie at residues 24–27 (CTCS) and 88–89 (ES). 6 disulfides stabilise this stretch: C24/C91, C26/C118, C36/C143, C145/C192, C150/C155, and C163/C184. Residues 24–143 (CTCSPSHPQD…GLNYRYHLGC (120 aa)) enclose the NTR domain. The interval 105–188 (TGRVYDGKMY…SKHYACIRQK (84 aa)) is mediates interaction with EFEMP1. N-linked (GlcNAc...) asparagine glycosylation is present at N207.

The protein belongs to the protease inhibitor I35 (TIMP) family. Interacts with EFEMP1. Interacts with KDR.

The protein resides in the secreted. The protein localises to the extracellular space. It localises to the extracellular matrix. Mediates a variety of processes including matrix regulation and turnover, inflammation, and angiogenesis, through reversible inhibition of zinc protease superfamily enzymes, primarily matrix metalloproteinases (MMPs). Regulates extracellular matrix (ECM) remodeling through inhibition of matrix metalloproteinases (MMP) including MMP-1, MMP-2, MMP-3, MMP-7, MMP-9, MMP-13, MMP-14 and MMP-15. Additionally, modulates the processing of amyloid precursor protein (APP) and apolipoprotein E receptor ApoER2 by inhibiting two alpha-secretases ADAM10 and ADAM17. Functions as a tumor suppressor and a potent inhibitor of angiogenesis. Exerts its anti-angiogenic effect by directly interacting with vascular endothelial growth factor (VEGF) receptor-2/KDR, preventing its binding to the VEGFA ligand. Selectively induces apoptosis in angiogenic endothelial cells through a caspase-independent cell death pathway. Mechanistically, inhibits matrix-induced focal adhesion kinase PTK2 tyrosine phosphorylation and association with paxillin/PXN and disrupts the incorporation of ITGB3, PTK2 and PXN into focal adhesion contacts on the matrix. The polypeptide is Metalloproteinase inhibitor 3 (TIMP3) (Bos taurus (Bovine)).